Reading from the N-terminus, the 603-residue chain is Phosphoenolpyruvate carboxykinase [GTP] (603 aa).

Substrate contacts are provided by residues arginine 87 and 209-211; that span reads YAG. 2 residues coordinate Mn(2+): lysine 218 and histidine 237. Serine 258 provides a ligand contact to substrate. Residue 259–264 participates in GTP binding; that stretch reads GSGKTS. Serine 260 is an active-site residue. Aspartate 275 serves as a coordination point for Mn(2+). 365 to 367 contacts substrate; sequence NAR. Residues arginine 367 and arginine 398 each coordinate GTP.

This sequence belongs to the phosphoenolpyruvate carboxykinase [GTP] family. Requires Mn(2+) as cofactor.

The protein resides in the cytoplasm. The catalysed reaction is oxaloacetate + GTP = phosphoenolpyruvate + GDP + CO2. Its pathway is carbohydrate biosynthesis; gluconeogenesis. Catalyzes the conversion of oxaloacetate (OAA) to phosphoenolpyruvate (PEP), the rate-limiting step in the metabolic pathway that produces glucose from lactate and other precursors derived from the citric acid cycle. This Saccharolobus solfataricus (strain ATCC 35092 / DSM 1617 / JCM 11322 / P2) (Sulfolobus solfataricus) protein is Phosphoenolpyruvate carboxykinase [GTP].